We begin with the raw amino-acid sequence, 1207 residues long: Dermatan-sulfate epimerase-like protein (1207 aa).

The signal sequence occupies residues 1–22 (MAFMFTEHLLFLTLMMCSFSTC). 4 N-linked (GlcNAc...) asparagine glycosylation sites follow: asparagine 28, asparagine 661, asparagine 683, and asparagine 704. 2 helical membrane passes run 761 to 781 (FPFGFKFNIAVGFILCISLVI) and 798 to 818 (CVLILVIALWFIELLDVWSTC). An N-linked (GlcNAc...) asparagine glycan is attached at asparagine 869.

It belongs to the dermatan-sulfate isomerase family.

It localises to the membrane. The protein is Dermatan-sulfate epimerase-like protein (Dsel) of Mus musculus (Mouse).